We begin with the raw amino-acid sequence, 446 residues long: Packaging protein 1 (446 aa).

A compositionally biased stretch (basic residues) spans 1–10; that stretch reads METRGRRRAF. The disordered stretch occupies residues 1-74; the sequence is METRGRRRAF…PSQPPQPRSL (74 aa). An ATP-binding site is contributed by 170–177; sequence GPTGCGKS. Residues 439–446 are DNA-binding; it reads RAYRKRNK.

Belongs to the adenoviridae packaging protein 1 family. Homodimer. Part of a genome packaging complex composed of packaging proteins 1, 2 and 3; this complex specifically binds to the packaging sequence on the left end of viral genomic DNA and performs packaging of the viral genome. Interacts with protein 33K.

Its subcellular location is the virion. It is found in the host nucleus. It localises to the host nucleoplasm. The protein localises to the host nucleolus. In terms of biological role, component of the packaging machinery which encapsidates the viral DNA into preformed capsids and transcriptional activator of the viral major late promoter (MLP). Binds, along with packaging proteins 2 and 3, to the specific packaging sequence on the left end of viral genomic DNA and displays ATPase activity thereby providing the power stroke of the packaging machinery. The activity of packaging protein IVa2 is stimulated by protein 33K which acts as a terminase. May be the protein that pumps DNA into the capsid powered by ATP hydrolysis. Specifically binds to the 5'-CG-3' nucleotides of the repeats making up the packaging sequence. Component of the DEF-A and DEF-B transcription factors that bind downstream elements of the major late promoter (MLP), and stimulate transcription from the MLP after initiation of viral DNA replication. DEF-A is a heterodimer packaging proteins 1 and 2 and DEF-B is a homodimer of packaging protein 1. The polypeptide is Packaging protein 1 (Human adenovirus F serotype 40 (HAdV-40)).